We begin with the raw amino-acid sequence, 97 residues long: Eclosion hormone (97 aa).

A signal peptide spans 1–17; it reads MNCKPLILCTFVAVAMC. 3 cysteine pairs are disulfide-bonded: Cys48–Cys72, Cys52–Cys68, and Cys55–Cys83.

It belongs to the insect eclosion hormone family. In terms of tissue distribution, expressed in a single pair of brain neurons which extend their processes the entire length of the central nervous system and also to the corpora cardiaca portion of the ring gland. These cells show massive depletion of immunoreactive Eh at ecdysis.

Its subcellular location is the secreted. Functionally, neuropeptide that triggers the performance of ecdysis behaviors at the end of a molt. It triggers adult behavior patterns: larval, pupal and adult ecdysis, and plasticization during the molt. In Drosophila melanogaster (Fruit fly), this protein is Eclosion hormone (Eh).